Consider the following 31-residue polypeptide: Cytochrome b6-f complex subunit 6 (31 aa).

Residues 4 to 24 (LLSYFAFLMLALTFTLALFVG) form a helical membrane-spanning segment.

Belongs to the PetL family. As to quaternary structure, the 4 large subunits of the cytochrome b6-f complex are cytochrome b6, subunit IV (17 kDa polypeptide, PetD), cytochrome f and the Rieske protein, while the 4 small subunits are PetG, PetL, PetM and PetN. The complex functions as a dimer.

The protein resides in the plastid. The protein localises to the chloroplast thylakoid membrane. In terms of biological role, component of the cytochrome b6-f complex, which mediates electron transfer between photosystem II (PSII) and photosystem I (PSI), cyclic electron flow around PSI, and state transitions. PetL is important for photoautotrophic growth as well as for electron transfer efficiency and stability of the cytochrome b6-f complex. This Adiantum capillus-veneris (Maidenhair fern) protein is Cytochrome b6-f complex subunit 6.